A 144-amino-acid polypeptide reads, in one-letter code: Large ribosomal subunit protein uL11 (144 aa).

It belongs to the universal ribosomal protein uL11 family. In terms of assembly, part of the ribosomal stalk of the 50S ribosomal subunit. Interacts with L10 and the large rRNA to form the base of the stalk. L10 forms an elongated spine to which L12 dimers bind in a sequential fashion forming a multimeric L10(L12)X complex. Post-translationally, one or more lysine residues are methylated.

In terms of biological role, forms part of the ribosomal stalk which helps the ribosome interact with GTP-bound translation factors. The sequence is that of Large ribosomal subunit protein uL11 from Rhodococcus erythropolis (strain PR4 / NBRC 100887).